The primary structure comprises 169 residues: Putative antitoxin Rv0268c (169 aa).

Over residues 1–11 (MGTRSKSRTRQ) the composition is skewed to basic residues. Residues 1-35 (MGTRSKSRTRQLKQSNGCTATTSGASDRRRRARRR) are disordered. The stretch at 120–153 (AAILISAERYESLMEELEDLRDRLSVHEREHVTM) forms a coiled coil.

It belongs to the phD/YefM antitoxin family.

Its function is as follows. Putative antitoxin component of a type II toxin-antitoxin (TA) system; however the expected toxin coding sequence is not found adjacent to this gene. This chain is Putative antitoxin Rv0268c, found in Mycobacterium tuberculosis (strain ATCC 25618 / H37Rv).